Here is a 286-residue protein sequence, read N- to C-terminus: uncharacterized protein (286 aa).

The first 19 residues, 1-19 (MISKEYISLLSALLTKGYS), serve as a signal peptide directing secretion.

This is an uncharacterized protein from Acidianus filamentous virus 2 (isolate Italy/Pozzuoli) (AFV-2).